The chain runs to 601 residues: DNA ligase (601 aa).

Asp258 is an ATP binding site. Lys260 (N6-AMP-lysine intermediate) is an active-site residue. The ATP site is built by Arg265, Arg280, Glu310, Phe350, Arg427, and Lys433. The disordered stretch occupies residues 568–601; that stretch reads DKSPEDATTTDEILEMYNKQPKKKIESPPIDESV.

It belongs to the ATP-dependent DNA ligase family. It depends on Mg(2+) as a cofactor.

It carries out the reaction ATP + (deoxyribonucleotide)n-3'-hydroxyl + 5'-phospho-(deoxyribonucleotide)m = (deoxyribonucleotide)n+m + AMP + diphosphate.. DNA ligase that seals nicks in double-stranded DNA during DNA replication, DNA recombination and DNA repair. This is DNA ligase from Saccharolobus islandicus (strain Y.G.57.14 / Yellowstone #1) (Sulfolobus islandicus).